A 446-amino-acid polypeptide reads, in one-letter code: NADH-quinone oxidoreductase subunit D (446 aa).

The protein belongs to the complex I 49 kDa subunit family. As to quaternary structure, NDH-1 is composed of 14 different subunits. Subunits NuoB, C, D, E, F, and G constitute the peripheral sector of the complex.

It is found in the cell membrane. The catalysed reaction is a quinone + NADH + 5 H(+)(in) = a quinol + NAD(+) + 4 H(+)(out). Its function is as follows. NDH-1 shuttles electrons from NADH, via FMN and iron-sulfur (Fe-S) centers, to quinones in the respiratory chain. The immediate electron acceptor for the enzyme in this species is believed to be a menaquinone. Couples the redox reaction to proton translocation (for every two electrons transferred, four hydrogen ions are translocated across the cytoplasmic membrane), and thus conserves the redox energy in a proton gradient. The polypeptide is NADH-quinone oxidoreductase subunit D (Mycobacterium sp. (strain JLS)).